The following is a 450-amino-acid chain: tRNA modification GTPase MnmE (450 aa).

(6S)-5-formyl-5,6,7,8-tetrahydrofolate contacts are provided by arginine 21, glutamate 80, and lysine 119. Positions 213-373 (GIKVVIIGKP…LEEEIIKSVK (161 aa)) constitute a TrmE-type G domain. Asparagine 223 serves as a coordination point for K(+). GTP contacts are provided by residues 223-228 (NVGKST), 242-248 (TDIPGTT), and 267-270 (DTAG). Residue serine 227 participates in Mg(2+) binding. K(+) contacts are provided by threonine 242, isoleucine 244, and threonine 247. Position 248 (threonine 248) interacts with Mg(2+). Residue lysine 450 coordinates (6S)-5-formyl-5,6,7,8-tetrahydrofolate.

It belongs to the TRAFAC class TrmE-Era-EngA-EngB-Septin-like GTPase superfamily. TrmE GTPase family. As to quaternary structure, homodimer. Heterotetramer of two MnmE and two MnmG subunits. K(+) serves as cofactor.

The protein localises to the cytoplasm. Exhibits a very high intrinsic GTPase hydrolysis rate. Involved in the addition of a carboxymethylaminomethyl (cmnm) group at the wobble position (U34) of certain tRNAs, forming tRNA-cmnm(5)s(2)U34. The chain is tRNA modification GTPase MnmE from Pseudothermotoga lettingae (strain ATCC BAA-301 / DSM 14385 / NBRC 107922 / TMO) (Thermotoga lettingae).